The primary structure comprises 335 residues: 2,4-dienoyl-CoA reductase [(3E)-enoyl-CoA-producing], mitochondrial (335 aa).

The N-terminal 34 residues, 1–34 (MALLGRAFFAGVSRLPCDPGPQRFFSFGTKTLYQ), are a transit peptide targeting the mitochondrion. N6-acetyllysine; alternate occurs at positions 42 and 49. N6-succinyllysine; alternate is present on residues K42 and K49. 66–71 (GGGTGL) lines the NADP(+) pocket. T69 carries the post-translational modification Phosphothreonine. K73 is modified (N6-succinyllysine). R91 contacts NADP(+). R91 lines the substrate pocket. K97 and K106 each carry N6-acetyllysine; alternate. N6-succinyllysine; alternate is present on residues K97 and K106. D117 contributes to the NADP(+) binding site. Substrate-binding residues include R119 and F149. The active-site Proton acceptor is the Y199. NADP(+)-binding positions include K214 and 240–243 (PGPI). Position 244 is an N6-acetyllysine; alternate (K244). K244 is modified (N6-succinyllysine; alternate). Residue R251 coordinates substrate. An N6-acetyllysine; alternate modification is found at K260. K260 bears the N6-succinyllysine; alternate mark. K315 bears the N6-acetyllysine mark. At K319 the chain carries N6-acetyllysine; alternate. K319 is subject to N6-succinyllysine; alternate.

This sequence belongs to the short-chain dehydrogenases/reductases (SDR) family. 2,4-dienoyl-CoA reductase subfamily. As to quaternary structure, homotetramer.

It is found in the mitochondrion. It carries out the reaction a (2E,4E)-dienoyl-CoA + NADPH + H(+) = a 4,5-saturated-(3E)-enoyl-CoA + NADP(+). The catalysed reaction is a (2E,4Z)-dienoyl-CoA + NADPH + H(+) = a 4,5-saturated-(3E)-enoyl-CoA + NADP(+). The enzyme catalyses (2E,4E)-hexadienoyl-CoA + NADPH + H(+) = (3E)-hexenoyl-CoA + NADP(+). Functionally, auxiliary enzyme of beta-oxidation. It participates in the metabolism of unsaturated fatty enoyl-CoA esters having double bonds in both even- and odd-numbered positions in mitochondria. Catalyzes the NADP-dependent reduction of 2,4-dienoyl-CoA to yield trans-3-enoyl-CoA. In Mus musculus (Mouse), this protein is 2,4-dienoyl-CoA reductase [(3E)-enoyl-CoA-producing], mitochondrial (Decr1).